The following is an 88-amino-acid chain: Small ribosomal subunit protein bS20 (88 aa).

This sequence belongs to the bacterial ribosomal protein bS20 family.

Binds directly to 16S ribosomal RNA. This Heliobacterium modesticaldum (strain ATCC 51547 / Ice1) protein is Small ribosomal subunit protein bS20.